We begin with the raw amino-acid sequence, 271 residues long: Ferric enterobactin transport ATP-binding protein FepC (271 aa).

The region spanning 8–244 (LRGEQLTLGY…ELIERIYGLR (237 aa)) is the ABC transporter domain. 40 to 47 (GPNGCGKS) is an ATP binding site.

Belongs to the ABC transporter superfamily. As to quaternary structure, the complex is composed of two ATP-binding proteins (FepC), two transmembrane proteins (FepD and FepG) and a solute-binding protein (FepB).

Its subcellular location is the cell inner membrane. It carries out the reaction Fe(III)-enterobactin(out) + ATP + H2O = Fe(III)-enterobactin(in) + ADP + phosphate + H(+). In terms of biological role, part of the ABC transporter complex FepBDGC involved in ferric enterobactin uptake. Responsible for energy coupling to the transport system. In Escherichia coli (strain K12), this protein is Ferric enterobactin transport ATP-binding protein FepC (fepC).